The sequence spans 314 residues: Cathepsin L 2 (314 aa).

The signal sequence occupies residues 1-24 (MMLLGASLYLNNTQEVSDEIDTAN). Residues 25-109 (LYANWKMKYN…NASNANFQYK (85 aa)) constitute a propeptide, activation peptide. 3 disulfide bridges follow: Cys-132/Cys-175, Cys-166/Cys-207, and Cys-259/Cys-302. Residue Cys-135 is part of the active site. Catalysis depends on residues His-265 and Asn-282.

Belongs to the peptidase C1 family.

The protein localises to the secreted. The catalysed reaction is Specificity close to that of papain. As compared to cathepsin B, cathepsin L exhibits higher activity toward protein substrates, but has little activity on Z-Arg-Arg-NHMec, and no peptidyl-dipeptidase activity.. Its function is as follows. May be involved in extracellular digestion. This Paramecium tetraurelia protein is Cathepsin L 2.